We begin with the raw amino-acid sequence, 278 residues long: MKILSGREKAEQDLKQLKKELDELNLNRPIKLAIIQVGDKMESNRYVEQKLKKAKEIGIEAKCFKFDENITQKRLLLAMDEINENWDGILIQLPLPKHLPKEVILDAVPYEKDIDGLSHRNEFILYNEKNSDDKFFVPAAARAVLELIEHHEINYKKKKVAVVGRSHLVGKPVAHILKRRGASVSTFDENTPIKLVASADIVIVAIGVPKYIKAENIKQGAIIIDVGTNYDQNDPSVIFGDVDHESVKTKASAITPVPGGVGPLTVVCLLKNLVEIYK.

NADP(+) is bound by residues 164–166 (GRS) and T228.

It belongs to the tetrahydrofolate dehydrogenase/cyclohydrolase family. Homodimer.

It catalyses the reaction (6R)-5,10-methylene-5,6,7,8-tetrahydrofolate + NADP(+) = (6R)-5,10-methenyltetrahydrofolate + NADPH. The catalysed reaction is (6R)-5,10-methenyltetrahydrofolate + H2O = (6R)-10-formyltetrahydrofolate + H(+). It participates in one-carbon metabolism; tetrahydrofolate interconversion. In terms of biological role, catalyzes the oxidation of 5,10-methylenetetrahydrofolate to 5,10-methenyltetrahydrofolate and then the hydrolysis of 5,10-methenyltetrahydrofolate to 10-formyltetrahydrofolate. The protein is Bifunctional protein FolD of Mycoplasmopsis synoviae (strain 53) (Mycoplasma synoviae).